The following is a 212-amino-acid chain: Peptide methionine sulfoxide reductase MsrA (212 aa).

The active site involves cysteine 52.

It belongs to the MsrA Met sulfoxide reductase family.

It catalyses the reaction L-methionyl-[protein] + [thioredoxin]-disulfide + H2O = L-methionyl-(S)-S-oxide-[protein] + [thioredoxin]-dithiol. The catalysed reaction is [thioredoxin]-disulfide + L-methionine + H2O = L-methionine (S)-S-oxide + [thioredoxin]-dithiol. In terms of biological role, has an important function as a repair enzyme for proteins that have been inactivated by oxidation. Catalyzes the reversible oxidation-reduction of methionine sulfoxide in proteins to methionine. This is Peptide methionine sulfoxide reductase MsrA from Shigella boydii serotype 4 (strain Sb227).